The primary structure comprises 497 residues: Aluminum-activated malate transporter 10 (497 aa).

The next 6 membrane-spanning stretches (helical) occupy residues 66–86 (KVVH…FYYM), 88–108 (PLYD…VVVF), 123–143 (VVAT…ATQS), 148–168 (VFVI…SRFV), 173–193 (ARFD…SVGG), and 210–230 (IAIG…IWAG). Disordered stretches follow at residues 413–437 (PIET…ERTT) and 476–497 (DFEQ…PLSS). The segment covering 417-436 (NKPEEVPSEEENKVDSEERT) has biased composition (basic and acidic residues). The segment covering 487 to 497 (DNNTKQPPLSS) has biased composition (polar residues).

The protein belongs to the aromatic acid exporter (TC 2.A.85) family.

It is found in the membrane. Functionally, malate transporter. The polypeptide is Aluminum-activated malate transporter 10 (ALMT10) (Arabidopsis thaliana (Mouse-ear cress)).